Consider the following 255-residue polypeptide: Type III pantothenate kinase (255 aa).

D6–D13 serves as a coordination point for ATP. G107 to L110 contacts substrate. D109 acts as the Proton acceptor in catalysis. Residue D129 coordinates K(+). Position 132 (T132) interacts with ATP. Residue T183 coordinates substrate.

This sequence belongs to the type III pantothenate kinase family. As to quaternary structure, homodimer. Requires NH4(+) as cofactor. K(+) is required as a cofactor.

The protein localises to the cytoplasm. The catalysed reaction is (R)-pantothenate + ATP = (R)-4'-phosphopantothenate + ADP + H(+). The protein operates within cofactor biosynthesis; coenzyme A biosynthesis; CoA from (R)-pantothenate: step 1/5. In terms of biological role, catalyzes the phosphorylation of pantothenate (Pan), the first step in CoA biosynthesis. The polypeptide is Type III pantothenate kinase (Dictyoglomus turgidum (strain DSM 6724 / Z-1310)).